A 149-amino-acid polypeptide reads, in one-letter code: Small ribosomal subunit protein bS6 (149 aa).

A disordered region spans residues 93 to 149 (VGKHEEGPSAMMQKRDRDDRPRRDGDRPDRGGFGDRGPRPDRGDRDDRPRRPREDRA). Basic and acidic residues predominate over residues 94–149 (GKHEEGPSAMMQKRDRDDRPRRDGDRPDRGGFGDRGPRPDRGDRDDRPRRPREDRA).

Belongs to the bacterial ribosomal protein bS6 family.

Functionally, binds together with bS18 to 16S ribosomal RNA. In Rhizobium meliloti (strain 1021) (Ensifer meliloti), this protein is Small ribosomal subunit protein bS6.